The chain runs to 2169 residues: Vitellogenin-A1 (2169 aa).

The N-terminal stretch at 1 to 46 (MATDGITSRFGFNERRRTHNRNSCRILEDKMLAKLLLLALAGLTAA) is a signal peptide. N-linked (GlcNAc...) asparagine glycans are attached at residues N107 and N125. The region spanning 116–1008 (WMPNYEYVYN…SNDHRYPSGL (893 aa)) is the Vitellogenin domain. A sulfotyrosine mark is found at Y159 and Y163. N-linked (GlcNAc...) asparagine glycosylation is found at N360, N391, and N435. Disordered stretches follow at residues 426-481 (DKKN…DKVE) and 514-570 (NDTS…SSSE). Residues 438–461 (SSSSSSSSSSSSSSSESSSSSSES) show a composition bias toward low complexity. An N-linked (GlcNAc...) asparagine glycan is attached at N514. Low complexity predominate over residues 517-531 (SSDSSSSDSSSSSSS). A glycan (N-linked (GlcNAc...) asparagine) is linked at N538. Positions 541 to 570 (SSYSSSSSSSSSSSSSESSSYSSSSSSSSE) are enriched in low complexity. N587, N763, and N781 each carry an N-linked (GlcNAc...) asparagine glycan. Y1067, Y1070, and Y1074 each carry sulfotyrosine. 3 N-linked (GlcNAc...) asparagine glycosylation sites follow: N1140, N1233, and N1336. A sulfotyrosine mark is found at Y1563, Y1564, and Y1570. N-linked (GlcNAc...) asparagine glycosylation is found at N1652 and N1696. Residues Y1737, Y1806, Y1809, Y1822, Y1824, and Y1888 each carry the sulfotyrosine modification. In terms of domain architecture, VWFD spans 1770–1979 (PSCSFSNDYF…SYAITGQNCT (210 aa)). Cystine bridges form between C1772-C1942 and C1794-C1978. An N-linked (GlcNAc...) asparagine glycan is attached at N1977. The segment covering 2026–2063 (EESSSSSSSSSSDSSSSSSSSESSSRSRSGSSSSSSSS) has biased composition (low complexity). The interval 2026–2081 (EESSSSSSSSSSDSSSSSSSSESSSRSRSGSSSSSSSSEEQKEFHPHKQEHSMKEC) is disordered. Residues 2064-2079 (EEQKEFHPHKQEHSMK) show a composition bias toward basic and acidic residues.

Post-translationally, glycosylated, phosphorylated and sulfated. The large subunit is sulfated more extensively than the small one. As to expression, produced by the fat body, where it is cleaved in the rough endoplasmic reticulum or cis-Golgi before being secreted into hemolymph. It is then sequestered by a single class of receptor mediated endocytosis in the ovary.

Precursor of the egg-yolk proteins that are sources of nutrients during embryonic development. May supply aromatic amino acids to the cuticle of rapidly developing embryos. This is Vitellogenin-A1 (VGA1) from Aedes aegypti (Yellowfever mosquito).